Here is a 344-residue protein sequence, read N- to C-terminus: Protein-arginine kinase (344 aa).

One can recognise a Phosphagen kinase C-terminal domain in the interval 14 to 244 (IVLSSRIRLA…KQIIQQERLA (231 aa)). Residues 17–21 (SSRIR), His-81, Arg-115, 166–170 (RASAM), and 197–202 (RGLYGE) contribute to the ATP site.

Belongs to the ATP:guanido phosphotransferase family.

The catalysed reaction is L-arginyl-[protein] + ATP = N(omega)-phospho-L-arginyl-[protein] + ADP + H(+). Its function is as follows. Catalyzes the specific phosphorylation of arginine residues in proteins. This chain is Protein-arginine kinase, found in Clostridium novyi (strain NT).